Here is a 457-residue protein sequence, read N- to C-terminus: MDHLPIFCQLRDRDCLIVGGGDVAERKARLLLEAGARLTVNALTFIPQFTVWANEGMLTLVEGPFDETLLDSCWLAIAATDDDTVNQRVSEAAESRRIFCNVVDAPKAASFIMPSIIDRSPLMVAVSSGGTSPVLARLLREKLESLLPQHLGQVARYAGQLRARVKKQFATMGERRRFWEKFFVNDRLAQSLANADEKAVNATTEHLFSEPLDHRGEVVLVGAGPGDAGLLTLKGLQQIQQADIVVYDRLVSDDIMNLVRRDADRVFVGKRAGYHCVPQEEINQILLREAQKGKRVVRLKGGDPFIFGRGGEELETLCHAGIPFSVVPGITAASGCSAYSGIPLTHRDYAQSVRLVTGHLKTGGELDWENLAAEKQTLVFYMGLNQAATIQDKLIAFGMQADMPVALVENGTSVKQRVVHGVLTQLGELAQQVESPALIIVGRVVGLRDKLNWFSNH.

Positions 1–204 (MDHLPIFCQL…ADEKAVNATT (204 aa)) are precorrin-2 dehydrogenase /sirohydrochlorin ferrochelatase. NAD(+) contacts are provided by residues 22 to 23 (DV) and 43 to 44 (LT). Serine 128 carries the post-translational modification Phosphoserine. Residues 216-457 (GEVVLVGAGP…RDKLNWFSNH (242 aa)) form a uroporphyrinogen-III C-methyltransferase region. Proline 225 contacts S-adenosyl-L-methionine. Catalysis depends on aspartate 248, which acts as the Proton acceptor. Catalysis depends on lysine 270, which acts as the Proton donor. S-adenosyl-L-methionine contacts are provided by residues 301–303 (GGD), isoleucine 306, 331–332 (TA), methionine 382, and glycine 411.

The protein in the N-terminal section; belongs to the precorrin-2 dehydrogenase / sirohydrochlorin ferrochelatase family. In the C-terminal section; belongs to the precorrin methyltransferase family.

It carries out the reaction uroporphyrinogen III + 2 S-adenosyl-L-methionine = precorrin-2 + 2 S-adenosyl-L-homocysteine + H(+). The catalysed reaction is precorrin-2 + NAD(+) = sirohydrochlorin + NADH + 2 H(+). It catalyses the reaction siroheme + 2 H(+) = sirohydrochlorin + Fe(2+). It functions in the pathway cofactor biosynthesis; adenosylcobalamin biosynthesis; precorrin-2 from uroporphyrinogen III: step 1/1. Its pathway is cofactor biosynthesis; adenosylcobalamin biosynthesis; sirohydrochlorin from precorrin-2: step 1/1. It participates in porphyrin-containing compound metabolism; siroheme biosynthesis; precorrin-2 from uroporphyrinogen III: step 1/1. The protein operates within porphyrin-containing compound metabolism; siroheme biosynthesis; siroheme from sirohydrochlorin: step 1/1. It functions in the pathway porphyrin-containing compound metabolism; siroheme biosynthesis; sirohydrochlorin from precorrin-2: step 1/1. Multifunctional enzyme that catalyzes the SAM-dependent methylations of uroporphyrinogen III at position C-2 and C-7 to form precorrin-2 via precorrin-1. Then it catalyzes the NAD-dependent ring dehydrogenation of precorrin-2 to yield sirohydrochlorin. Finally, it catalyzes the ferrochelation of sirohydrochlorin to yield siroheme. This Salmonella schwarzengrund (strain CVM19633) protein is Siroheme synthase.